The following is a 199-amino-acid chain: dITP/XTP pyrophosphatase (199 aa).

Residue 12-17 participates in substrate binding; it reads SGNAGK. Residue Asp-73 is the Proton acceptor of the active site. Asp-73 serves as a coordination point for Mg(2+). Substrate is bound by residues Ser-74, 157-160, Lys-180, and 185-186; these read FGYD and HR.

Belongs to the HAM1 NTPase family. In terms of assembly, homodimer. The cofactor is Mg(2+).

It carries out the reaction XTP + H2O = XMP + diphosphate + H(+). It catalyses the reaction dITP + H2O = dIMP + diphosphate + H(+). The catalysed reaction is ITP + H2O = IMP + diphosphate + H(+). Its function is as follows. Pyrophosphatase that catalyzes the hydrolysis of nucleoside triphosphates to their monophosphate derivatives, with a high preference for the non-canonical purine nucleotides XTP (xanthosine triphosphate), dITP (deoxyinosine triphosphate) and ITP. Seems to function as a house-cleaning enzyme that removes non-canonical purine nucleotides from the nucleotide pool, thus preventing their incorporation into DNA/RNA and avoiding chromosomal lesions. This chain is dITP/XTP pyrophosphatase, found in Neisseria meningitidis serogroup A / serotype 4A (strain DSM 15465 / Z2491).